We begin with the raw amino-acid sequence, 702 residues long: Arylphorin subunit alpha (702 aa).

An N-terminal signal peptide occupies residues 1–16 (MKTVVILAGLVALALS). N-linked (GlcNAc...) asparagine glycosylation is found at asparagine 75 and asparagine 214.

Belongs to the hemocyanin family. As to quaternary structure, arylphorin is a hexamer of subunits alpha and beta. As to expression, fat body.

It is found in the secreted. It localises to the extracellular space. Functionally, arylphorin is a larval storage protein (LSP) which may serve as a storage protein used primarily as a source of aromatic amino acids for protein synthesis during metamorphosis. It is a constituent of the sclerotizing system of the cuticle, and serves as a carrier for ecdysteroid hormone. This is Arylphorin subunit alpha from Manduca sexta (Tobacco hawkmoth).